Consider the following 420-residue polypeptide: Tyrosine--tRNA ligase (420 aa).

Residue Tyr39 participates in L-tyrosine binding. The short motif at 44 to 53 (CTAPSLHIGS) is the 'HIGH' region element. The L-tyrosine site is built by Tyr176 and Gln180. The short motif at 236 to 240 (KMGKT) is the 'KMSKS' region element. Residue Lys239 participates in ATP binding. Residues 349–414 (IPLIDLLYDT…AGKKRHIKIL (66 aa)) enclose the S4 RNA-binding domain.

This sequence belongs to the class-I aminoacyl-tRNA synthetase family. TyrS type 1 subfamily. Homodimer.

The protein localises to the cytoplasm. The enzyme catalyses tRNA(Tyr) + L-tyrosine + ATP = L-tyrosyl-tRNA(Tyr) + AMP + diphosphate + H(+). Its function is as follows. Catalyzes the attachment of tyrosine to tRNA(Tyr) in a two-step reaction: tyrosine is first activated by ATP to form Tyr-AMP and then transferred to the acceptor end of tRNA(Tyr). The chain is Tyrosine--tRNA ligase from Wolbachia pipientis subsp. Culex pipiens (strain wPip).